We begin with the raw amino-acid sequence, 160 residues long: Nucleotide-binding protein BP2916 (160 aa).

The protein belongs to the YajQ family.

Functionally, nucleotide-binding protein. This Bordetella pertussis (strain Tohama I / ATCC BAA-589 / NCTC 13251) protein is Nucleotide-binding protein BP2916.